The chain runs to 355 residues: Elongation factor Ts (355 aa).

The involved in Mg(2+) ion dislocation from EF-Tu stretch occupies residues 82–85 (TDFV).

Belongs to the EF-Ts family.

It localises to the cytoplasm. Its function is as follows. Associates with the EF-Tu.GDP complex and induces the exchange of GDP to GTP. It remains bound to the aminoacyl-tRNA.EF-Tu.GTP complex up to the GTP hydrolysis stage on the ribosome. This Helicobacter pylori (strain ATCC 700392 / 26695) (Campylobacter pylori) protein is Elongation factor Ts (tsf).